The chain runs to 121 residues: Large ribosomal subunit protein uL14 (121 aa).

It belongs to the universal ribosomal protein uL14 family. Part of the 50S ribosomal subunit. Forms a cluster with proteins L3 and L19. In the 70S ribosome, L14 and L19 interact and together make contacts with the 16S rRNA in bridges B5 and B8.

Its function is as follows. Binds to 23S rRNA. Forms part of two intersubunit bridges in the 70S ribosome. The chain is Large ribosomal subunit protein uL14 from Akkermansia muciniphila (strain ATCC BAA-835 / DSM 22959 / JCM 33894 / BCRC 81048 / CCUG 64013 / CIP 107961 / Muc).